Consider the following 178-residue polypeptide: Large ribosomal subunit protein uL6 (178 aa).

The protein belongs to the universal ribosomal protein uL6 family. In terms of assembly, part of the 50S ribosomal subunit.

Its function is as follows. This protein binds to the 23S rRNA, and is important in its secondary structure. It is located near the subunit interface in the base of the L7/L12 stalk, and near the tRNA binding site of the peptidyltransferase center. The sequence is that of Large ribosomal subunit protein uL6 from Shouchella clausii (strain KSM-K16) (Alkalihalobacillus clausii).